The chain runs to 473 residues: Fumarate hydratase class II (473 aa).

Residues 104-106, 128-131, 138-140, and Thr-186 each bind substrate; these read SGT, HPND, and SSN. His-187 functions as the Proton donor/acceptor in the catalytic mechanism. Ser-318 is an active-site residue. Substrate-binding positions include Ser-319 and 324–326; that span reads KVN.

Belongs to the class-II fumarase/aspartase family. Fumarase subfamily. In terms of assembly, homotetramer.

It localises to the cytoplasm. It catalyses the reaction (S)-malate = fumarate + H2O. It participates in carbohydrate metabolism; tricarboxylic acid cycle; (S)-malate from fumarate: step 1/1. Involved in the TCA cycle. Catalyzes the stereospecific interconversion of fumarate to L-malate. This is Fumarate hydratase class II from Corynebacterium efficiens (strain DSM 44549 / YS-314 / AJ 12310 / JCM 11189 / NBRC 100395).